Consider the following 112-residue polypeptide: Putative acyl carrier protein, mitochondrial (112 aa).

The transit peptide at 1-28 (MLSRFSSQLRFISAVRPVIPKFQPLRFY) directs the protein to the mitochondrion. One can recognise a Carrier domain in the interval 33 to 109 (PDAEKRILKV…DAISYITKNP (77 aa)). Residue Ser69 is modified to O-(pantetheine 4'-phosphoryl)serine.

This sequence belongs to the acyl carrier protein (ACP) family. 4'-phosphopantetheine is transferred from CoA to a specific serine of apo-ACP by acpS. This modification is essential for activity because fatty acids are bound in thioester linkage to the sulfhydryl of the prosthetic group.

The protein localises to the mitochondrion. It functions in the pathway lipid metabolism; fatty acid biosynthesis. Its function is as follows. Carrier of the growing fatty acid chain in fatty acid biosynthesis. May be involved in the synthesis of very-long-chain fatty acids. In Schizosaccharomyces pombe (strain 972 / ATCC 24843) (Fission yeast), this protein is Putative acyl carrier protein, mitochondrial.